We begin with the raw amino-acid sequence, 481 residues long: Keratin, type I cytoskeletal 39 (481 aa).

Residues 1 to 25 form a disordered region; that stretch reads MDTKGSTVTISSSTPPQNCSGNTNV. Positions 1-90 are head; sequence MDTKGSTVTI…RCSDGINSHE (90 aa). One can recognise an IF rod domain in the interval 90–401; that stretch reads EKETMQILNE…SLLESLDGRL (312 aa). A coil 1A region spans residues 91 to 125; it reads KETMQILNERLASYLEKVRMLEGENADLEDKIQEE. The interval 126-136 is linker 1; it reads CSKTLPILCPD. Residues 137–237 are coil 1B; the sequence is YLSYYTTIEQ…HEEEINSLQC (101 aa). The segment at 238-253 is linker 12; it reads QLGDRINIEVTAAPSV. The tract at residues 254–397 is coil 2; it reads DLNQILQKMR…ATYRSLLESL (144 aa). The segment at 398 to 481 is tail; sequence DGRLPCNPCT…PCYITRPAKV (84 aa).

This sequence belongs to the intermediate filament family. Heterotetramer of two type I and two type II keratins.

May play a role in late hair differentiation. The sequence is that of Keratin, type I cytoskeletal 39 (Krt39) from Rattus norvegicus (Rat).